Here is a 304-residue protein sequence, read N- to C-terminus: E3 ubiquitin-protein ligase CCNB1IP1 homolog (304 aa).

The RING-type; degenerate zinc-finger motif lies at 3-42 (CNACWRDLEGRAISTTCGHLLCTEDASKILSNDGACPICD). A coiled-coil region spans residues 124-184 (TAYQKMGKRC…YESVKRTAIQ (61 aa)). The segment at 218–279 (SFFSPATPGP…GGGGTANPQS (62 aa)) is disordered. The span at 235–250 (RQNSSNSGPFDISTDS) shows a compositional bias: polar residues.

In terms of tissue distribution, expressed mostly in flower buds and roots.

Its subcellular location is the nucleus. The protein resides in the chromosome. The catalysed reaction is S-ubiquitinyl-[E2 ubiquitin-conjugating enzyme]-L-cysteine + [acceptor protein]-L-lysine = [E2 ubiquitin-conjugating enzyme]-L-cysteine + N(6)-ubiquitinyl-[acceptor protein]-L-lysine.. Its pathway is protein modification; protein ubiquitination. Ubiquitin E3 ligase required for class I crossover (CO) formation during meiosis. The sequence is that of E3 ubiquitin-protein ligase CCNB1IP1 homolog (HEI10) from Arabidopsis thaliana (Mouse-ear cress).